The chain runs to 222 residues: Matrix protein (222 aa).

A PTAP/PSAP motif motif is present at residues 46-49 (PTAP).

As to quaternary structure, homomultimer. Interacts with viral nucleocapsid. Interacts with host TSG101.

It is found in the virion membrane. Its subcellular location is the host endomembrane system. The protein localises to the host nucleus membrane. Functionally, plays a major role in assembly and budding of virion, by recruiting cellular partners of the ESCRT complexes that play a key role in releasing the budding particle from the host membrane. Condensates the ribonucleocapsid core during virus assembly. This Drosophila melanogaster (Fruit fly) protein is Matrix protein (M).